An 863-amino-acid polypeptide reads, in one-letter code: MSKNTSDLSSHTPMMQQYWRLKNQHPDQLMFYRMGDFYEIFYEDAKKAAKLLDITLTARGQSAGQSIPMCGIPYHSLEGYLVKLVKLGESVVICEQIGDPATSKGPVERQVVRIITPGTVSDEALLDERRDNLIAAVLGDERLFGLSVLDITSGNFSVLEIKGWENLLAELERINPVELLIPDDWPKDLPAEKRRGTKRRAPWDFERDSALKSLCQQFSVQDLKGFGCETLTLAIGAAGCLLGYAKETQRTALPHLRSLRHERLDDTVVLDGASRRNLELDTNLAGGRDNTLQSVVDRCQTAMGSRLLTRWLNRPLRDLTVLQARQTSITCLLDGYRFEKLQPQLKEIGDIERILARIGLRNARPRDLARLRDALGALPQLQVAMTELDTPHLQQLAVTAGTYPELAALLEKAIIDNPPAIIRDGGVLKTGYDSELDELQSLSENAGQFLIDLEAREKARTGLANLKVGYNRVHGYFIELPSKQAESAPIDYQRRQTLKGAERFITPELKAFEDKALSAKSRALAREKMLYEALLEDLISQLAPLQDTAAALAELDVLSNLAERALNLDLNCPRFVSEPCMRIVQGRHPVVEQVLTTPFVANDLSLDDDTRMLVITGPNMGGKSTYMRQTALIVLLAHIGSFVPAASCELSLVDRIFTRIGSSDDLAGGRSTFMVEMSETANILHNATERSLVLMDEVGRGTSTFDGLSLAWAAAERLAHLRAYTLFATHYFELTVLPESEPLVTNVHLNATEHNERIVFLHHVLPGPASQSYGLAVAQLAGVPNDVITRAREHLSRLETTALPHETVVASPTKATSKPAAPHQSDMFASLPHPVLDELAKLDLDGLTPRKALEMLYALQVRI.

617–624 (GPNMGGKS) is an ATP binding site.

It belongs to the DNA mismatch repair MutS family.

In terms of biological role, this protein is involved in the repair of mismatches in DNA. It is possible that it carries out the mismatch recognition step. This protein has a weak ATPase activity. The chain is DNA mismatch repair protein MutS from Pseudomonas fluorescens (strain SBW25).